A 360-amino-acid chain; its full sequence is COP9 signalosome complex subunit 5 (360 aa).

The region spanning 60–197 (AKISALALLK…IGAFRTYPKD (138 aa)) is the MPN domain. 3 residues coordinate Zn(2+): His143, His145, and Asp156. Positions 143 to 156 (HSHPGYGCWLSGID) match the JAMM motif motif. Disordered stretches follow at residues 293-315 (LMPSQRKKEQEESPLAKVTRDSS) and 341-360 (SNKASTSAPDSSGPEPMVEA). Residues 341–350 (SNKASTSAPD) are compositionally biased toward polar residues.

It belongs to the peptidase M67A family. CSN5 subfamily. Component of the CSN complex, probably composed of CSN1, CSN2, CSN3, CSN4, CSN5, CSN6, CSN7 and CSN8. Interacts with MCM2.

In terms of biological role, probable protease subunit of the COP9 signalosome complex (CSN), a complex involved in various cellular and developmental processes such as photomorphogenesis and response to hormones. The CSN complex is an essential regulator of the ubiquitin (Ubl) conjugation pathway by mediating the deneddylation of the cullin subunits of SCF-type E3 ligase complexes, leading to decrease the Ubl ligase activity of SCF. Involved in early response to iron deficiency. This chain is COP9 signalosome complex subunit 5, found in Oryza sativa subsp. japonica (Rice).